Consider the following 559-residue polypeptide: MLEHFPWLTTMIALPLVAALFIPLIPDKDGKQVRWYALGVGLADFVLMSYVFWTNYDISSTGFQLQEKFSWIPQFGLSWSVSVDGISMPLVLLAGLVTTLSIFAAWQVDHKPRLFYFLMLVLYAAQIGVFVAQDMLLLFIMWELELVPVYLLVCIWGGQKRQYAAMKFLLYTAAASVFILVAALGLAFYGDVTTFDIAELGLKDYPIALELFLYAGLLIAFGVKLAIFPFHTWLPDAHGEASAPVSMILAGVLLKMGGYGLIRLNLGLLEDAHVYFAPILVILGVVNIIYGGFSSFAQDNMKRRLAYSSVSHMGFVLLGIASFTDLGISGAMLQMLSHGLIAAVLFFLAGVTYDRTHTLSLAQMGNIGKVMPTVFALFTMGAMASLALPGMSGFVSELAVFVGVSSSDIYSTPFKTVTVFLAAVGLVLTPIYLLSMLRQLFYGNNIPPSCNLEQDNLSANSDQEAVCFGTSCVLPGNAIYDDARPREVFIAACFLLPIIAVGLYPKLATQTYDATTVAVNSQVRQSYVQIAETNPRVYAEALTAPHIPTTDFATVKVQP.

14 helical membrane passes run 5-25, 35-55, 86-106, 114-134, 136-156, 168-188, 207-227, 242-262, 274-294, 310-330, 331-351, 374-394, 417-437, and 488-508; these read FPWL…IPLI, WYAL…FWTN, ISMP…FAAW, LFYF…VAQD, LLLF…VCIW, FLLY…GLAF, IALE…KLAI, SAPV…YGLI, VYFA…GGFS, VSHM…GISG, AMLQ…LAGV, VFAL…MSGF, VTVF…LSML, and VFIA…PKLA.

Belongs to the complex I subunit 4 family.

The protein localises to the cellular thylakoid membrane. The enzyme catalyses a plastoquinone + NADH + (n+1) H(+)(in) = a plastoquinol + NAD(+) + n H(+)(out). The catalysed reaction is a plastoquinone + NADPH + (n+1) H(+)(in) = a plastoquinol + NADP(+) + n H(+)(out). In terms of biological role, NDH-1 shuttles electrons from NAD(P)H, via FMN and iron-sulfur (Fe-S) centers, to quinones in the respiratory chain. The immediate electron acceptor for the enzyme in this species is believed to be plastoquinone. Couples the redox reaction to proton translocation (for every two electrons transferred, four hydrogen ions are translocated across the cytoplasmic membrane), and thus conserves the redox energy in a proton gradient. This is NAD(P)H-quinone oxidoreductase chain 4-2 (ndhD2) from Synechocystis sp. (strain ATCC 27184 / PCC 6803 / Kazusa).